A 337-amino-acid polypeptide reads, in one-letter code: DNA-directed RNA polymerase subunit alpha (337 aa).

Residues 1-233 (MVREEVAVST…DLFIPFLHAE (233 aa)) are alpha N-terminal domain (alpha-NTD). Residues 266–337 (GIALKCIFID…FTIDLPKNKF (72 aa)) are alpha C-terminal domain (alpha-CTD).

This sequence belongs to the RNA polymerase alpha chain family. In terms of assembly, in plastids the minimal PEP RNA polymerase catalytic core is composed of four subunits: alpha, beta, beta', and beta''. When a (nuclear-encoded) sigma factor is associated with the core the holoenzyme is formed, which can initiate transcription.

The protein resides in the plastid. It localises to the chloroplast. The enzyme catalyses RNA(n) + a ribonucleoside 5'-triphosphate = RNA(n+1) + diphosphate. Its function is as follows. DNA-dependent RNA polymerase catalyzes the transcription of DNA into RNA using the four ribonucleoside triphosphates as substrates. In Liriodendron tulipifera (Tuliptree), this protein is DNA-directed RNA polymerase subunit alpha.